A 339-amino-acid chain; its full sequence is MNLAIDVASGEKPLEELVSGAISALQENKDINLILVGNEKNISKAISKTKYDHNRIDIRHTDEIIDMNESPANGIKHKKNASVLLAARLVREKEADGFFSPGNTGATLAAALTEIGRLKGVMRPPLISTLPKLNGEFCMLDMGANVDCTTDYIVQFAVMGRVFAKRYLKIDNPRVGLLNIGEEDSKGNANTKKSFERLQKMKKINFIGNIEPNDMLKSDSVDVVVADGFDGNIVLKTIEGTASFVVNLLKEEVKKNPVSVMGGLMMKPVFNNLKSKMSSDSYGSAILLGLNGGAFVGHGKTSGVGMKNAVLNMYKFLDAKINEKIAKELYDSGAKRRIF.

Belongs to the PlsX family. As to quaternary structure, homodimer. Probably interacts with PlsY.

The protein localises to the cytoplasm. It carries out the reaction a fatty acyl-[ACP] + phosphate = an acyl phosphate + holo-[ACP]. The protein operates within lipid metabolism; phospholipid metabolism. Its function is as follows. Catalyzes the reversible formation of acyl-phosphate (acyl-PO(4)) from acyl-[acyl-carrier-protein] (acyl-ACP). This enzyme utilizes acyl-ACP as fatty acyl donor, but not acyl-CoA. The sequence is that of Phosphate acyltransferase from Brachyspira hyodysenteriae (strain ATCC 49526 / WA1).